A 147-amino-acid polypeptide reads, in one-letter code: Protein disulfide isomerase-like 5-1 (147 aa).

The signal sequence occupies residues 1–29 (MDLAPGRRARLLVALALVVLVALAARSGA). The 108-residue stretch at 30 to 137 (EVITLTEETF…LKNFVSDEAE (108 aa)) folds into the Thioredoxin domain. Active-site nucleophile residues include C59 and C62. C59 and C62 form a disulfide bridge.

Belongs to the protein disulfide isomerase family.

In terms of biological role, acts as a protein-folding catalyst that interacts with nascent polypeptides to catalyze the formation, isomerization, and reduction or oxidation of disulfide bonds. May play a role in storage protein biogenesis. The sequence is that of Protein disulfide isomerase-like 5-1 (PDIL5-1) from Oryza sativa subsp. japonica (Rice).